The primary structure comprises 1361 residues: Rho guanine nucleotide exchange factor 18 (1361 aa).

Disordered regions lie at residues 33–88 (LQDL…SCSE), 131–156 (SGGGTPAESPGKECDSPKKRGRSRSV), and 244–292 (DGAG…ARER). Basic and acidic residues predominate over residues 50 to 61 (PDSRPTGEEPGR). A compositionally biased stretch (polar residues) spans 64–73 (LFSSLAGSQD). The span at 74-88 (LSRRRSWERSRSCSE) shows a compositional bias: basic and acidic residues. Basic and acidic residues-rich tracts occupy residues 245-256 (GAGKNEKSDKST) and 271-292 (RQKEKGKSPAHLKDKGQDARER). A C2H2-type; degenerate zinc finger spans residues 310–334 (SSCPLCGKPFLSSASLKEHPRGTLL). Residues 348–368 (TVSQKGGPQPTPSPAGPGTQL) are disordered. The 198-residue stretch at 447 to 644 (KRQDVLYELM…KDIISQVDAK (198 aa)) folds into the DH domain. Positions 684 to 786 (QLHLEGMLCW…WMAHIQRAVE (103 aa)) constitute a PH domain. Disordered stretches follow at residues 893–980 (ANGQ…DPRL), 1143–1211 (LKKQ…RLAK), 1229–1264 (AAVQQQIPTKLAASTKGGKDKGGKSRGSQRWESSAS), and 1277–1361 (MGKD…VIFF). Thr-912 carries the post-translational modification Phosphothreonine. A Phosphoserine modification is found at Ser-921. Residues 1038–1148 (LEQERQRNFE…LLRRLKKQNT (111 aa)) are a coiled coil. The span at 1191 to 1211 (YAERPEVARRDSAPTENRLAK) shows a compositional bias: basic and acidic residues. Residues 1254–1264 (RGSQRWESSAS) show a composition bias toward polar residues. 2 positions are modified to phosphoserine: Ser-1289 and Ser-1291. Pro residues-rich tracts occupy residues 1300–1317 (PAPPPDPGFPAPSPPPAD) and 1334–1344 (PGPPAPSPLPA). Positions 1349 to 1361 (AKEDASKEDVIFF) are enriched in basic and acidic residues.

Interacts with SEPT9; the interaction may inhibit GEF activity. Interacts with Gbetagamma subunits GNB1 and GNG2. Interacts with EPB41L4B. Interacts with PATJ (via C-terminus). In terms of tissue distribution, expressed in all tissues tested with highest expression in kidney and pancreas. Weakly or not expressed in liver, skeletal muscle and testis. Isoform 1: Expressed in eosinophils. Isoform 2: Expressed in eosinophils. Isoform 3: Expressed in eosinophils. Isoform 4: Not detected in eosinophils.

The protein resides in the cytoplasm. It localises to the cytoskeleton. The protein localises to the cell membrane. It is found in the apical cell membrane. Its function is as follows. Acts as a guanine nucleotide exchange factor (GEF) for RhoA GTPases. Its activation induces formation of actin stress fibers. Also acts as a GEF for RAC1, inducing production of reactive oxygen species (ROS). Does not act as a GEF for CDC42. The G protein beta-gamma (Gbetagamma) subunits of heterotrimeric G proteins act as activators, explaining the integrated effects of LPA and other G-protein coupled receptor agonists on actin stress fiber formation, cell shape change and ROS production. Required for EPB41L4B-mediated regulation of the circumferential actomyosin belt in epithelial cells. This is Rho guanine nucleotide exchange factor 18 (ARHGEF18) from Homo sapiens (Human).